The sequence spans 407 residues: MNVNGENNEKIDEHHLESSLAGVPTLPVSPLDHAKDLSQTNPNAQIGDLVTQTANLIAIKKQLLEDIAFNQHIQSMQVRAIQSFPQNNQVAPPFQQFDPRRRGLARMQKPESYKTVICQAWLESKTCSFADNCRFAHGEEELRPTFVEPLQNNKYKTKLCDKYTTTGLCPYGKRCLFIHPDHGPNAYIRADKLLEVSQRHALADIRDQMEQHIMTNGRIAAPPLSAIQHPLEMFARPSTPDEPAAKLPLGPTPVSTRGPRYELPTKELHDAEGAMTYPPSRWPLDPSMFALDAWNMAHRPASPLDSMVLGSAPNAGSFGMLGKQNTPGGVSGYSSAGSTPSQDLSSSSLNAASAAAAAAYFANSAVAQSLLMKSVATDPMMSCNGPFSPMPGFDQLAENMTKHLNLW.

The segment at M1 to Q39 is disordered. Residues N7–E17 are compositionally biased toward basic and acidic residues. Positions I46–A80 are required for taf-4 binding. C3H1-type zinc fingers lie at residues S112 to E140 and K154 to H182. Phosphothreonine; by mbk-2 and GSK3 is present on T239. The residue at position 302 (S302) is a Phosphoserine; by mbk-2. T339 bears the Phosphothreonine; by GSK3 mark.

In terms of assembly, interacts with taf-4 (via C-terminus). Interacts with ifet-1. Component of a ribonucleoprotein particle complex that interacts with cgh-1 and car-1 in an RNA-dependent manner. Association with many proteins is dependent on the presence of RNA. In terms of processing, phosphorylation by mbk-2 and by gsk-3 are required for its rapid degradation following meiosis II. Exclusively expressed in the hermaphrodite gonad. Expressed prior to oocyte division. Widely distributed throughout gonadal oocytes from the mitotic stage to the developing diakinesis stage. Expressed in sperm.

It localises to the cytoplasm. The protein localises to the cytoplasmic granule. The protein resides in the nucleus. In terms of biological role, zinc-finger RNA-binding protein that binds to 5'-UA[AU]-3' motifs in the 3'-UTR of maternal mRNAs to suppress translation in oocytes and embryos. Acts as a ribonucleoprotein particle component that may exert part of its function within cytoplasmic foci of unfertilized oocytes. Acts redundantly with oma-2 to control the temporal expression and distribution of maternal proteins and thereby promote meiotic progression, oocyte maturation, fertilization and embryonic development. Recruits the translational repressor ifet-1 to the 3'-UTR of mei-1 and zif-1 to negatively regulate their translation. By suppressing the translation of the E3 ligase zif-1, may in turn play a role in the stabilization of zif-1 targets such as the maternal transcriptional repressor protein pie-1. Following fertilization, sequesters the transcription initiation factor, taf-4, in the cytoplasm, which prevents its nuclear localization and thus allows for transcriptional suppression in early embryos, but not in oocytes. Also, together with oma-2, is involved in P-granule distribution during embryonic development. The protein is CCCH-type zinc finger protein oma-1 of Caenorhabditis elegans.